We begin with the raw amino-acid sequence, 360 residues long: Photosystem II protein D1 (360 aa).

3 consecutive transmembrane segments (helical) span residues 29–46 (YIGWFGVLMIPTLLTATS), 118–133 (HFLTGVACYIGREWEL), and 142–156 (WISVAFTAPVAAAAA). Residue His-118 coordinates chlorophyll a. Tyr-126 provides a ligand contact to pheophytin a. Asp-170 and Glu-189 together coordinate [CaMn4O5] cluster. The chain crosses the membrane as a helical span at residues 197–218 (FHQLGVAGVFGGSLFSAMHGSL). Chlorophyll a is bound at residue His-198. Residues His-215 and 264 to 265 (SF) each bind a quinone. Fe cation is bound at residue His-215. Position 272 (His-272) interacts with Fe cation. Residues 274 to 288 (FLGLWPVVGIWLTAL) form a helical membrane-spanning segment. 4 residues coordinate [CaMn4O5] cluster: His-332, Glu-333, Asp-342, and Ala-344. A propeptide spanning residues 345-360 (SGESLPVALTAPAVNG) is cleaved from the precursor.

It belongs to the reaction center PufL/M/PsbA/D family. As to quaternary structure, PSII is composed of 1 copy each of membrane proteins PsbA, PsbB, PsbC, PsbD, PsbE, PsbF, PsbH, PsbI, PsbJ, PsbK, PsbL, PsbM, PsbT, PsbX, PsbY, PsbZ, Psb30/Ycf12, at least 3 peripheral proteins of the oxygen-evolving complex and a large number of cofactors. It forms dimeric complexes. It depends on The D1/D2 heterodimer binds P680, chlorophylls that are the primary electron donor of PSII, and subsequent electron acceptors. It shares a non-heme iron and each subunit binds pheophytin, quinone, additional chlorophylls, carotenoids and lipids. D1 provides most of the ligands for the Mn4-Ca-O5 cluster of the oxygen-evolving complex (OEC). There is also a Cl(-1) ion associated with D1 and D2, which is required for oxygen evolution. The PSII complex binds additional chlorophylls, carotenoids and specific lipids. as a cofactor. In terms of processing, tyr-161 forms a radical intermediate that is referred to as redox-active TyrZ, YZ or Y-Z. Post-translationally, C-terminally processed by CTPA; processing is essential to allow assembly of the oxygen-evolving complex and thus photosynthetic growth.

The protein localises to the plastid. It is found in the chloroplast thylakoid membrane. It catalyses the reaction 2 a plastoquinone + 4 hnu + 2 H2O = 2 a plastoquinol + O2. Its function is as follows. Photosystem II (PSII) is a light-driven water:plastoquinone oxidoreductase that uses light energy to abstract electrons from H(2)O, generating O(2) and a proton gradient subsequently used for ATP formation. It consists of a core antenna complex that captures photons, and an electron transfer chain that converts photonic excitation into a charge separation. The D1/D2 (PsbA/PsbD) reaction center heterodimer binds P680, the primary electron donor of PSII as well as several subsequent electron acceptors. In Pyropia yezoensis (Susabi-nori), this protein is Photosystem II protein D1.